The chain runs to 785 residues: MDAVIRGNDVIFVLKTIGVPSVCRQNEDPRFVEAFKCDELERYIKNNPECTLFESLRDEEAYSIVRIFMDVDLDACLDEIDYLTAIQDFIIEVSNCVARFAFTECGAIHENVIKSMRSNFSLTKSTNRDKTSFHIIFLDTYTTMDTLIAMKRTLLELSRSSENPLTRSIDTAVYRKKTTLRVVGTRKNPNCDTIHVMQPPHDNIEDYLFTYVDMNNNSYYFSLQRRLEDLVPDKLWEPGFISFEDAIKRVSKIFINSIINFNDLDENNFTTVPLVIDYVTPCALCKKRSHKHPHQLSLENDAIRIYKTGNPHSCKVKIVPLDGNKLFNIAQRILDTNSVLLTERGDHIVWINNSWKFNSEEPLITKLILSIRHQLPKEYSSELLCPRKRKTVEANIRDMLVDSVETDTYPDKLPFKNGVLDLVDGMFYSGDDAKKYTCTVSTGFKFDDTKFVEDSPEMEELINIINDIQPLTDENKKNRELYEKTLSSCLCGATKGCLTFFFGETATGKSTTKRLLKSAISDLFVETGQTILTDVLDKGPNPFIANMHLKRSVFCSELPDFACSGTKKIRSDNIKKLTEPCVIGRPCFSNKINNRNHATIIIDTNYKPVFDRIDNALMRRIAVVRFRTHFSQPSGREAAENNDAYDKVKLLDEGLDGKIQNNRYRFAFLYLLVKWYRKYHVPIMKLYPTPEEIPDFAFYLKIGTLLVSSSVKHIPLMTDLSKKGYILHDNVVTLPLTTFQQKISKYFNSRLFGHDIESFINRHKKFANVSDEYLQYIFIEDISSP.

Asp-170 is an active-site residue. The interval 342 to 469 is primase; that stretch reads TERGDHIVWI…ELINIINDIQ (128 aa). The 163-residue stretch at 477-639 folds into the SF3 helicase domain; the sequence is KNRELYEKTL…FSQPSGREAA (163 aa). 503-510 serves as a coordination point for ATP; it reads GETATGKS.

The protein belongs to the orthopoxvirus OPG117 family. As to quaternary structure, homomultimer; hexamer. Interacts with OPG148.

The protein resides in the host cytoplasm. Functionally, multifunctional protein required for genome uncoating and replication. Major viral uncoating protein that is required for the release of the viral genome from incoming viral cores containing the viral DNA genome. Possesses an ATPase activity that is required for hexamerization and uncoating. This is Uncoating factor OPG117 (OPG117) from Variola virus (isolate Human/India/Ind3/1967) (VARV).